A 409-amino-acid polypeptide reads, in one-letter code: Argininosuccinate synthase (409 aa).

ATP-binding positions include 16 to 24 (AYSGGLDTS) and A44. Residues Y96 and S101 each contribute to the L-citrulline site. G126 is an ATP binding site. Residues T128, N132, and D133 each contribute to the L-aspartate site. N132 is a binding site for L-citrulline. 5 residues coordinate L-citrulline: R136, S185, S194, E270, and Y282.

The protein belongs to the argininosuccinate synthase family. Type 1 subfamily. As to quaternary structure, homotetramer.

The protein localises to the cytoplasm. It catalyses the reaction L-citrulline + L-aspartate + ATP = 2-(N(omega)-L-arginino)succinate + AMP + diphosphate + H(+). The protein operates within amino-acid biosynthesis; L-arginine biosynthesis; L-arginine from L-ornithine and carbamoyl phosphate: step 2/3. The chain is Argininosuccinate synthase from Shewanella piezotolerans (strain WP3 / JCM 13877).